Consider the following 1065-residue polypeptide: Valine--tRNA ligase, mitochondrial (1065 aa).

Residues 1–15 (MPHLPLASFRPPLWG) constitute a mitochondrion transit peptide. A disordered region spans residues 27 to 52 (ALCTQPEPHGSPVSRRNREAKQKRLR). A compositionally biased stretch (basic and acidic residues) spans 42-52 (RNREAKQKRLR). A 'HIGH' region motif is present at residues 146 to 156 (PNVTGSLHIGH). Positions 659–663 (KMSKS) match the 'KMSKS' region motif. Lys-662 is an ATP binding site.

This sequence belongs to the class-I aminoacyl-tRNA synthetase family.

The protein resides in the mitochondrion. It catalyses the reaction tRNA(Val) + L-valine + ATP = L-valyl-tRNA(Val) + AMP + diphosphate. In terms of biological role, catalyzes the attachment of valine to tRNA(Val) in a two-step reaction: valine is first activated by ATP to form Val-AMP and then transferred to the acceptor end of tRNA(Val). This is Valine--tRNA ligase, mitochondrial (Vars2) from Rattus norvegicus (Rat).